A 137-amino-acid polypeptide reads, in one-letter code: Small ribosomal subunit protein uS12 (137 aa).

Disordered regions lie at residues methionine 1–serine 21 and valine 34–lysine 57.

This sequence belongs to the universal ribosomal protein uS12 family. In terms of assembly, part of the 30S ribosomal subunit. Contacts proteins S8 and S17. May interact with IF1 in the 30S initiation complex.

Functionally, with S4 and S5 plays an important role in translational accuracy. In terms of biological role, interacts with and stabilizes bases of the 16S rRNA that are involved in tRNA selection in the A site and with the mRNA backbone. Located at the interface of the 30S and 50S subunits, it traverses the body of the 30S subunit contacting proteins on the other side and probably holding the rRNA structure together. The combined cluster of proteins S8, S12 and S17 appears to hold together the shoulder and platform of the 30S subunit. The chain is Small ribosomal subunit protein uS12 from Streptococcus mutans serotype c (strain ATCC 700610 / UA159).